A 153-amino-acid polypeptide reads, in one-letter code: Large ribosomal subunit protein uL15 (153 aa).

A disordered region spans residues 21–40; it reads RGIGSGKGKTGGRGIKGQKS. Residues 23–35 show a composition bias toward gly residues; it reads IGSGKGKTGGRGI.

It belongs to the universal ribosomal protein uL15 family. In terms of assembly, part of the 50S ribosomal subunit.

Its function is as follows. Binds to the 23S rRNA. This is Large ribosomal subunit protein uL15 from Rickettsia canadensis (strain McKiel).